Here is a 336-residue protein sequence, read N- to C-terminus: tRNA(Ile)-lysidine synthase (336 aa).

ATP is bound at residue 40–45; that stretch reads SGGQDS.

This sequence belongs to the tRNA(Ile)-lysidine synthase family.

Its subcellular location is the cytoplasm. It catalyses the reaction cytidine(34) in tRNA(Ile2) + L-lysine + ATP = lysidine(34) in tRNA(Ile2) + AMP + diphosphate + H(+). Functionally, ligates lysine onto the cytidine present at position 34 of the AUA codon-specific tRNA(Ile) that contains the anticodon CAU, in an ATP-dependent manner. Cytidine is converted to lysidine, thus changing the amino acid specificity of the tRNA from methionine to isoleucine. The protein is tRNA(Ile)-lysidine synthase of Prochlorococcus marinus (strain SARG / CCMP1375 / SS120).